A 290-amino-acid polypeptide reads, in one-letter code: Sodium/potassium-transporting ATPase subunit beta-2 (290 aa).

At 1–39 (MVIQKEKKSCGQVVEEWKEFVWNPRTHQFMGRTGTSWAF) the chain is on the cytoplasmic side. The chain crosses the membrane as a helical; Signal-anchor for type II membrane protein span at residues 40 to 67 (ILLFYLVFYGFLTAMFTLTMWVMLQTVS). The Extracellular portion of the chain corresponds to 68-290 (DHTPKYQDRL…VAFKLRINKA (223 aa)). Asn-96 and Asn-118 each carry an N-linked (GlcNAc...) asparagine glycan. Cys-129 and Cys-150 are joined by a disulfide. Residues Asn-153 and Asn-159 are each glycosylated (N-linked (GlcNAc...) asparagine). Residues Cys-160 and Cys-177 are joined by a disulfide bond. N-linked (GlcNAc...) asparagine glycans are attached at residues Asn-193, Asn-197, and Asn-238. The immunoglobulin-like stretch occupies residues 193 to 290 (NQSMNVTCVG…VAFKLRINKA (98 aa)). The cysteines at positions 200 and 261 are disulfide-linked.

This sequence belongs to the X(+)/potassium ATPases subunit beta family. In terms of assembly, the sodium/potassium-transporting ATPase is composed of a catalytic alpha subunit, an auxiliary non-catalytic beta subunit and an additional regulatory subunit. Interacts with isoform 2 of BSG. Highly expressed in brain (at protein level).

The protein resides in the cell membrane. This is the non-catalytic component of the active enzyme, which catalyzes the hydrolysis of ATP coupled with the exchange of Na(+) and K(+) ions across the plasma membrane. The exact function of the beta-2 subunit is not known. In terms of biological role, mediates cell adhesion of neurons and astrocytes, and promotes neurite outgrowth. The chain is Sodium/potassium-transporting ATPase subunit beta-2 (Atp1b2) from Rattus norvegicus (Rat).